Here is a 381-residue protein sequence, read N- to C-terminus: Cytochrome b (381 aa).

4 consecutive transmembrane segments (helical) span residues Phe34–Met54, Trp78–Ile99, Trp114–Leu134, and Phe179–Leu199. 2 residues coordinate heme b: His84 and His98. Residues His183 and His197 each contribute to the heme b site. His202 contributes to the a ubiquinone binding site. A run of 4 helical transmembrane segments spans residues Tyr227 to Ile247, Leu289 to Gln309, Met321 to Gly341, and Phe348 to Pro368.

Belongs to the cytochrome b family. In terms of assembly, the cytochrome bc1 complex contains 3 respiratory subunits (MT-CYB, CYC1 and UQCRFS1), 2 core proteins (UQCRC1 and UQCRC2) and probably 6 low-molecular weight proteins. Heme b serves as cofactor.

It localises to the mitochondrion inner membrane. In terms of biological role, component of the ubiquinol-cytochrome c reductase complex (complex III or cytochrome b-c1 complex) that is part of the mitochondrial respiratory chain. The b-c1 complex mediates electron transfer from ubiquinol to cytochrome c. Contributes to the generation of a proton gradient across the mitochondrial membrane that is then used for ATP synthesis. This chain is Cytochrome b (mt-cyb), found in Galeocerdo cuvier (Tiger shark).